The sequence spans 672 residues: Iron-phytosiderophore transporter YSL15 (672 aa).

Residues 1-11 (MEHADADRTRV) show a composition bias toward basic and acidic residues. The disordered stretch occupies residues 1 to 27 (MEHADADRTRVAPEIGSLHDEDAEADP). Transmembrane regions (helical) follow at residues 47–67 (GVVA…KIAL), 70–90 (GLVP…LRGW), 115–135 (CAVA…LLGL), 158–178 (GIGW…LSLI), 218–238 (LHGF…QWFY), 279–299 (LVNL…WPLI), 325–345 (FLCI…VTGV), 390–410 (MAYS…PIMF), 418–438 (VIIA…GAGL), 450–470 (IALF…AGLV), 504–524 (VGEL…FMLF), 556–576 (ISAL…FAVL), 602–622 (FLVG…LFAW), and 630–650 (AAFM…IWTF).

Belongs to the YSL (TC 2.A.67.2) family. As to expression, expressed in root phloem and at low levels in the shoot companion cells.

It is found in the cell membrane. In terms of biological role, involved in Fe(3+) uptake from the rhizosphere and phloem transport of iron. Plays an important role in iron homeostasis during the early stages of growth. Transports Fe(3+)-phytosiderophore, but not Fe(3+)- or Fe(2+)-nicotianamine. May not transport other chelated metals. The protein is Iron-phytosiderophore transporter YSL15 (YSL15) of Oryza sativa subsp. japonica (Rice).